The chain runs to 217 residues: 7-cyano-7-deazaguanine synthase (217 aa).

10-20 (FSGGQDSTTCL) is an ATP binding site. Residues C185, C194, C197, and C200 each contribute to the Zn(2+) site.

It belongs to the QueC family. Homodimer. Requires Zn(2+) as cofactor.

The catalysed reaction is 7-carboxy-7-deazaguanine + NH4(+) + ATP = 7-cyano-7-deazaguanine + ADP + phosphate + H2O + H(+). It functions in the pathway purine metabolism; 7-cyano-7-deazaguanine biosynthesis. Catalyzes the ATP-dependent conversion of 7-carboxy-7-deazaguanine (CDG) to 7-cyano-7-deazaguanine (preQ(0)). The chain is 7-cyano-7-deazaguanine synthase from Streptococcus thermophilus (strain ATCC BAA-491 / LMD-9).